The chain runs to 427 residues: 3-phosphoshikimate 1-carboxyvinyltransferase (427 aa).

3-phosphoshikimate is bound by residues lysine 20, serine 21, and arginine 25. Lysine 20 contacts phosphoenolpyruvate. Phosphoenolpyruvate-binding residues include glycine 92 and arginine 120. Serine 166, glutamine 168, aspartate 312, and lysine 339 together coordinate 3-phosphoshikimate. Glutamine 168 serves as a coordination point for phosphoenolpyruvate. Aspartate 312 (proton acceptor) is an active-site residue. The phosphoenolpyruvate site is built by arginine 343 and arginine 385.

It belongs to the EPSP synthase family. As to quaternary structure, monomer.

It is found in the cytoplasm. The enzyme catalyses 3-phosphoshikimate + phosphoenolpyruvate = 5-O-(1-carboxyvinyl)-3-phosphoshikimate + phosphate. The protein operates within metabolic intermediate biosynthesis; chorismate biosynthesis; chorismate from D-erythrose 4-phosphate and phosphoenolpyruvate: step 6/7. Catalyzes the transfer of the enolpyruvyl moiety of phosphoenolpyruvate (PEP) to the 5-hydroxyl of shikimate-3-phosphate (S3P) to produce enolpyruvyl shikimate-3-phosphate and inorganic phosphate. This Streptococcus pneumoniae serotype 2 (strain D39 / NCTC 7466) protein is 3-phosphoshikimate 1-carboxyvinyltransferase.